The primary structure comprises 450 residues: Ribosomal protein uS12 methylthiotransferase RimO (450 aa).

The MTTase N-terminal domain maps to 10–125; the sequence is SRIALVSLGC…VVDIVRRAAT (116 aa). [4Fe-4S] cluster contacts are provided by cysteine 19, cysteine 54, cysteine 88, cysteine 162, cysteine 166, and cysteine 169. The Radical SAM core domain occupies 148 to 378; that stretch reads SGSPFTAYLK…AAVQREVSRA (231 aa). One can recognise a TRAM domain in the interval 381-447; it reads RARVGSEVTV…PYDLRARVLS (67 aa).

It belongs to the methylthiotransferase family. RimO subfamily. It depends on [4Fe-4S] cluster as a cofactor.

The protein resides in the cytoplasm. The enzyme catalyses L-aspartate(89)-[ribosomal protein uS12]-hydrogen + (sulfur carrier)-SH + AH2 + 2 S-adenosyl-L-methionine = 3-methylsulfanyl-L-aspartate(89)-[ribosomal protein uS12]-hydrogen + (sulfur carrier)-H + 5'-deoxyadenosine + L-methionine + A + S-adenosyl-L-homocysteine + 2 H(+). Catalyzes the methylthiolation of an aspartic acid residue of ribosomal protein uS12. The protein is Ribosomal protein uS12 methylthiotransferase RimO of Desulforudis audaxviator (strain MP104C).